The primary structure comprises 382 residues: Lipid-A-disaccharide synthase (382 aa).

Belongs to the LpxB family.

The enzyme catalyses 2-N,3-O-bis[(3R)-3-hydroxytetradecanoyl]-alpha-D-glucosaminyl 1-phosphate + UDP-2-N,3-O-bis[(3R)-3-hydroxytetradecanoyl]-alpha-D-glucosamine = lipid A disaccharide (E. coli) + UDP + H(+). The catalysed reaction is a lipid X + a UDP-2-N,3-O-bis[(3R)-3-hydroxyacyl]-alpha-D-glucosamine = a lipid A disaccharide + UDP + H(+). It functions in the pathway glycolipid biosynthesis; lipid IV(A) biosynthesis; lipid IV(A) from (3R)-3-hydroxytetradecanoyl-[acyl-carrier-protein] and UDP-N-acetyl-alpha-D-glucosamine: step 5/6. Functionally, condensation of UDP-2,3-diacylglucosamine and 2,3-diacylglucosamine-1-phosphate to form lipid A disaccharide, a precursor of lipid A, a phosphorylated glycolipid that anchors the lipopolysaccharide to the outer membrane of the cell. The chain is Lipid-A-disaccharide synthase from Shigella flexneri.